Consider the following 393-residue polypeptide: S-adenosylmethionine decarboxylase proenzyme (393 aa).

Active-site residues include E11 and E14. S71 functions as the Schiff-base intermediate with substrate; via pyruvic acid in the catalytic mechanism. S71 bears the Pyruvic acid (Ser); by autocatalysis mark. C85 serves as the catalytic Proton donor; for catalytic activity. Active-site proton acceptor; for processing activity residues include S236 and H249.

This sequence belongs to the eukaryotic AdoMetDC family. It depends on pyruvate as a cofactor. Post-translationally, is synthesized initially as an inactive proenzyme. Formation of the active enzyme involves a self-maturation process in which the active site pyruvoyl group is generated from an internal serine residue via an autocatalytic post-translational modification. Two non-identical subunits are generated from the proenzyme in this reaction, and the pyruvate is formed at the N-terminus of the alpha chain, which is derived from the carboxyl end of the proenzyme. The post-translation cleavage follows an unusual pathway, termed non-hydrolytic serinolysis, in which the side chain hydroxyl group of the serine supplies its oxygen atom to form the C-terminus of the beta chain, while the remainder of the serine residue undergoes an oxidative deamination to produce ammonia and the pyruvoyl group blocking the N-terminus of the alpha chain.

It carries out the reaction S-adenosyl-L-methionine + H(+) = S-adenosyl 3-(methylsulfanyl)propylamine + CO2. Its pathway is amine and polyamine biosynthesis; S-adenosylmethioninamine biosynthesis; S-adenosylmethioninamine from S-adenosyl-L-methionine: step 1/1. In Hordeum chilense (Barley), this protein is S-adenosylmethionine decarboxylase proenzyme (SAMDC).